The sequence spans 425 residues: Palmitoyltransferase ZDHHC23 (425 aa).

The Cytoplasmic segment spans residues 1–81; the sequence is MKPVKKKKTE…RIPWLRGAKK (81 aa). The helical transmembrane segment at 82-99 threads the bilayer; it reads VNISIVPPLVLLPVFLHV. Residues 100–102 are Lumenal-facing; sequence ASW. The helical transmembrane segment at 103 to 125 threads the bilayer; the sequence is HFLLGVVVLTSLPMLALWYYYLT. Residues 126 to 130 are Cytoplasmic-facing; it reads HRRKE. The chain crosses the membrane as a helical span at residues 131-151; the sequence is QTLFFLSLGLFSLGYMYYVFL. Over 152–159 the chain is Lumenal; that stretch reads REVVPQGR. The helical transmembrane segment at 160–180 threads the bilayer; that stretch reads VGPTQLALLTCGLLLILLALY. Residues 181 to 292 lie on the Cytoplasmic side of the membrane; that stretch reads RAKKNPGYLS…NSCVGESNHQ (112 aa). Residues 249-299 enclose the DHHC domain; sequence DWCAKCQLVRPARAWHCRICGICVRRMDHHCVWINSCVGESNHQAFILALS. Cys279 acts as the S-palmitoyl cysteine intermediate in catalysis. The helical transmembrane segment at 293 to 313 threads the bilayer; the sequence is AFILALSIFLLTSVYGISLTL. The Lumenal portion of the chain corresponds to 314 to 343; that stretch reads NTICRDRSLFTALFYCPGVYANYSSALSFT. The chain crosses the membrane as a helical span at residues 344 to 364; the sequence is CVWYSVIITAGMAYIFLIQLI. At 365–425 the chain is on the cytoplasmic side; sequence NISYNVTERE…TVHTPAEDIV (61 aa). The interval 422 to 425 is interaction with NOS1; sequence EDIV.

This sequence belongs to the DHHC palmitoyltransferase family. Interacts with NOS1. Expressed in the brain.

The protein localises to the golgi apparatus membrane. Its subcellular location is the golgi apparatus. It localises to the trans-Golgi network membrane. The catalysed reaction is L-cysteinyl-[protein] + hexadecanoyl-CoA = S-hexadecanoyl-L-cysteinyl-[protein] + CoA. Its function is as follows. Palmitoyltransferase that could catalyze the addition of palmitate onto various protein substrates and be involved in a variety of cellular processes. Palmitoyltransferase that mediates palmitoylation of KCNMA1, regulating localization of KCNMA1 to the plasma membrane. May be involved in NOS1 regulation and targeting to the synaptic membrane. This chain is Palmitoyltransferase ZDHHC23, found in Mus musculus (Mouse).